We begin with the raw amino-acid sequence, 406 residues long: Putative nickel insertion protein (406 aa).

This sequence belongs to the LarC family.

In Thermomicrobium roseum (strain ATCC 27502 / DSM 5159 / P-2), this protein is Putative nickel insertion protein.